A 258-amino-acid chain; its full sequence is Serine/arginine-rich splicing factor x16 (258 aa).

The region spanning 8–81 (RKVYVGDLGN…RRARVELSTG (74 aa)) is the RRM domain. Disordered stretches follow at residues 81–113 (GKYA…GGRG) and 130–258 (CRER…VSRD). Residues 86–103 (SGGGGGGGGGGGGGGGLG) are compositionally biased toward gly residues. Over residues 104–113 (GRDRGGGGRG) the composition is skewed to basic and acidic residues. The CCHC-type zinc-finger motif lies at 116–132 (KCYECGGRGHFARHCRE). Composition is skewed to basic residues over residues 130 to 141 (CRERKARQRRRS) and 149 to 166 (STSR…RSRS). Basic and acidic residues-rich tracts occupy residues 180-197 (NGRD…HERN) and 210-221 (RRYEDEDDDRVR). Low complexity-rich tracts occupy residues 231–240 (RSASPAVRRG) and 249–258 (SSASRSVSRD).

As to quaternary structure, interacts (via Arg/Ser-rich region) with Alsin2/CG7564, Rbp1 and Doa (via N-terminus). Highly phosphorylated. May be phosphorylated by the serine/threonine-protein kinase Doa.

It is found in the nucleus. Its function is as follows. Serine/arginine-rich splicing factor (SR protein) involved in differential exon usage during RNA transcript processing, probably by binding exonic splicing enhancer elements and recruiting components of the splicing machinery. Binds RNA stem-loop structures with consensus sequence 5'-CCGUNUNKNW-3'. Regulator of genes involved in lipid and carbohydrate metabolism, the immune response and the response to xenobiotics. The chain is Serine/arginine-rich splicing factor x16 from Drosophila melanogaster (Fruit fly).